The chain runs to 599 residues: Elongation factor 4 (599 aa).

Residues 5–187 (SHIRNFSIIA…RLVAVIPPPT (183 aa)) enclose the tr-type G domain. GTP is bound by residues 17–22 (DHGKST) and 134–137 (NKMD).

This sequence belongs to the TRAFAC class translation factor GTPase superfamily. Classic translation factor GTPase family. LepA subfamily.

It localises to the cell inner membrane. The catalysed reaction is GTP + H2O = GDP + phosphate + H(+). Required for accurate and efficient protein synthesis under certain stress conditions. May act as a fidelity factor of the translation reaction, by catalyzing a one-codon backward translocation of tRNAs on improperly translocated ribosomes. Back-translocation proceeds from a post-translocation (POST) complex to a pre-translocation (PRE) complex, thus giving elongation factor G a second chance to translocate the tRNAs correctly. Binds to ribosomes in a GTP-dependent manner. This Stutzerimonas stutzeri (strain A1501) (Pseudomonas stutzeri) protein is Elongation factor 4.